The sequence spans 485 residues: Endo-1,4-beta-xylanase C (485 aa).

An N-terminal signal peptide occupies residues Met1–Ala19. In terms of domain architecture, GH11 spans Lys34–Asp234. 2 N-linked (GlcNAc...) asparagine glycosylation sites follow: Asn56 and Asn107. Glu128 functions as the Nucleophile in the catalytic mechanism. Asn175 carries N-linked (GlcNAc...) asparagine glycosylation. Catalysis depends on Glu221, which acts as the Proton donor. Residues Ala250–Cys450 form a disordered region. Low complexity-rich tracts occupy residues Ala265 to His330 and Gly344 to Gly354. A run of 7 repeats spans residues Gly275–Gln280, Gly281–Gln286, Gly287–Gln292, Gly293–Gln298, Gly299–Gln304, Gly310–Gln315, and Gly316–Gln321. The interval Gly275–Gln321 is 7 X 6 AA tandem repeats of G-Q-Q-P-P-Q. Residue Asn349 is glycosylated (N-linked (GlcNAc...) asparagine). Tandem repeats lie at residues Gly353–Gln361, Gly362–Gln370, Gly371–Gln379, Gly380–Gln388, Gly389–Asn397, Gly399–Gln407, Gly408–Gln416, and Gly417–Gln425. The 8 X 9 AA tandem repeats of G-G-[SN]-P-W-G-G-N-Q stretch occupies residues Gly353–Gln425. Residues Ser355–Gln425 show a composition bias toward gly residues. Low complexity predominate over residues Trp426 to Ser445. Asn443 carries an N-linked (GlcNAc...) asparagine glycan. Positions Asn449–Gln484 constitute a CBM1 domain.

Belongs to the glycosyl hydrolase 11 (cellulase G) family.

The protein localises to the secreted. The enzyme catalyses Endohydrolysis of (1-&gt;4)-beta-D-xylosidic linkages in xylans.. Its pathway is glycan degradation; xylan degradation. Endo-1,4-beta-xylanase involved in the hydrolysis of xylan, a major structural heterogeneous polysaccharide found in plant biomass representing the second most abundant polysaccharide in the biosphere, after cellulose. This Neocallimastix patriciarum (Rumen fungus) protein is Endo-1,4-beta-xylanase C (xynC).